The sequence spans 376 residues: Integrator complex assembly factor WDR73 (376 aa).

WD repeat units lie at residues 84–123 (FSEEPVECLIHIPGTRCLVTSGNSNTLQIWDIGGDDSDVI), 276–316 (ASKN…TESS), and 337–376 (TSPAVVTAHSWHPSRPKTLLSAATDGSLHVWDWVDKITDR). The tract at residues 316-336 (SSPQPIFSHRGHEMSQEAKSS) is disordered.

Belongs to the WD repeat WDR73 family.

It localises to the cytoplasm. The protein resides in the cytoskeleton. Its subcellular location is the spindle. It is found in the spindle pole. The protein localises to the cleavage furrow. Component of a multiprotein complex required for the assembly of the RNA endonuclease module of the integrator complex. Associates with ints9 and ints11 in the cytoplasm, stabilizing the ints9-ints11 heterodimer and blocking the active site of ints11. Brat1 then joins the complex and plugs the active site of ints11, leading to wdr73 release and nuclear import of ints9 and ints11. This chain is Integrator complex assembly factor WDR73 (wdr73), found in Danio rerio (Zebrafish).